Here is a 429-residue protein sequence, read N- to C-terminus: Saccharopine dehydrogenase-like oxidoreductase (429 aa).

A2 bears the N-acetylalanine mark. 3 positions are modified to phosphoserine: S209, S215, and S217.

The protein belongs to the saccharopine dehydrogenase family.

The sequence is that of Saccharopine dehydrogenase-like oxidoreductase (Sccpdh) from Rattus norvegicus (Rat).